Reading from the N-terminus, the 23-residue chain is Dahlein-4.3 (23 aa).

In terms of tissue distribution, expressed by the skin dorsal glands.

It is found in the secreted. Has no antimicrobial activity. The polypeptide is Dahlein-4.3 (Ranoidea dahlii (Dahl's aquatic frog)).